A 630-amino-acid chain; its full sequence is tRNA uridine 5-carboxymethylaminomethyl modification enzyme MnmG (630 aa).

An FAD-binding site is contributed by 13–18 (GGGHAG). 273–287 (GPRYCPSIEDKVMRF) contacts NAD(+).

It belongs to the MnmG family. In terms of assembly, homodimer. Heterotetramer of two MnmE and two MnmG subunits. FAD serves as cofactor.

Its subcellular location is the cytoplasm. Its function is as follows. NAD-binding protein involved in the addition of a carboxymethylaminomethyl (cmnm) group at the wobble position (U34) of certain tRNAs, forming tRNA-cmnm(5)s(2)U34. The protein is tRNA uridine 5-carboxymethylaminomethyl modification enzyme MnmG of Actinobacillus pleuropneumoniae serotype 5b (strain L20).